We begin with the raw amino-acid sequence, 83 residues long: Vitellogenesis-inhibiting hormone (83 aa).

3 disulfide bridges follow: Cys15/Cys52, Cys32/Cys48, and Cys35/Cys61.

Found in the sinus glands of both male and female. Found also in the brain; the neuroendocrine structures of the protocerebrum.

It localises to the secreted. In terms of biological role, inhibits secondary vitellogenesis in females. Has no hyperglycemic or molt-inhibiting activity. The polypeptide is Vitellogenesis-inhibiting hormone (Armadillidium vulgare (Pillbug)).